Reading from the N-terminus, the 1131-residue chain is DNA-directed RNA polymerase subunit beta (1131 aa).

The interval Gln1108–Glu1131 is disordered. Residues Leu1122 to Glu1131 are compositionally biased toward basic and acidic residues.

The protein belongs to the RNA polymerase beta chain family. As to quaternary structure, in cyanobacteria the RNAP catalytic core is composed of 2 alpha, 1 beta, 1 beta', 1 gamma and 1 omega subunit. When a sigma factor is associated with the core the holoenzyme is formed, which can initiate transcription.

The catalysed reaction is RNA(n) + a ribonucleoside 5'-triphosphate = RNA(n+1) + diphosphate. DNA-dependent RNA polymerase catalyzes the transcription of DNA into RNA using the four ribonucleoside triphosphates as substrates. This chain is DNA-directed RNA polymerase subunit beta, found in Nostoc sp. (strain PCC 7120 / SAG 25.82 / UTEX 2576).